A 191-amino-acid chain; its full sequence is dCTP deaminase, dUMP-forming (191 aa).

DCTP contacts are provided by residues 101-106 (KSSLGR), Asp119, 127-129 (TLE), Gln148, Tyr162, and Gln174. The active-site Proton donor/acceptor is Glu129.

The protein belongs to the dCTP deaminase family. As to quaternary structure, homotrimer.

It catalyses the reaction dCTP + 2 H2O = dUMP + NH4(+) + diphosphate. It functions in the pathway pyrimidine metabolism; dUMP biosynthesis; dUMP from dCTP: step 1/1. Bifunctional enzyme that catalyzes both the deamination of dCTP to dUTP and the hydrolysis of dUTP to dUMP without releasing the toxic dUTP intermediate. The sequence is that of dCTP deaminase, dUMP-forming from Streptomyces avermitilis (strain ATCC 31267 / DSM 46492 / JCM 5070 / NBRC 14893 / NCIMB 12804 / NRRL 8165 / MA-4680).